The sequence spans 648 residues: DNA mismatch repair protein MutL (648 aa).

Residues 336–443 form a disordered region; sequence ERPFEPSSPQ…SGSAGESRAR (108 aa). The segment covering 370–381 has biased composition (polar residues); the sequence is SPESKTHSTWNE. The span at 383-410 shows a compositional bias: basic and acidic residues; it reads SRVDTSRAETSRESRIDSPLGERTRDIA.

The protein belongs to the DNA mismatch repair MutL/HexB family.

In terms of biological role, this protein is involved in the repair of mismatches in DNA. It is required for dam-dependent methyl-directed DNA mismatch repair. May act as a 'molecular matchmaker', a protein that promotes the formation of a stable complex between two or more DNA-binding proteins in an ATP-dependent manner without itself being part of a final effector complex. The protein is DNA mismatch repair protein MutL of Shewanella sp. (strain ANA-3).